Here is a 509-residue protein sequence, read N- to C-terminus: Aromatase (509 aa).

Cys437 is a heme binding site.

This sequence belongs to the cytochrome P450 family. Requires heme as cofactor.

It localises to the membrane. It catalyses the reaction testosterone + 3 reduced [NADPH--hemoprotein reductase] + 3 O2 = 17beta-estradiol + formate + 3 oxidized [NADPH--hemoprotein reductase] + 4 H2O + 4 H(+). It carries out the reaction androst-4-ene-3,17-dione + 3 reduced [NADPH--hemoprotein reductase] + 3 O2 = estrone + formate + 3 oxidized [NADPH--hemoprotein reductase] + 4 H2O + 4 H(+). Functionally, catalyzes the formation of aromatic C18 estrogens from C19 androgens. The sequence is that of Aromatase (CYP19A1) from Taeniopygia guttata (Zebra finch).